Here is a 111-residue protein sequence, read N- to C-terminus: Large ribosomal subunit protein uL22 (111 aa).

This sequence belongs to the universal ribosomal protein uL22 family. As to quaternary structure, part of the 50S ribosomal subunit.

In terms of biological role, this protein binds specifically to 23S rRNA; its binding is stimulated by other ribosomal proteins, e.g. L4, L17, and L20. It is important during the early stages of 50S assembly. It makes multiple contacts with different domains of the 23S rRNA in the assembled 50S subunit and ribosome. Its function is as follows. The globular domain of the protein is located near the polypeptide exit tunnel on the outside of the subunit, while an extended beta-hairpin is found that lines the wall of the exit tunnel in the center of the 70S ribosome. This chain is Large ribosomal subunit protein uL22, found in Clostridium acetobutylicum (strain ATCC 824 / DSM 792 / JCM 1419 / IAM 19013 / LMG 5710 / NBRC 13948 / NRRL B-527 / VKM B-1787 / 2291 / W).